Consider the following 157-residue polypeptide: Transcriptional repressor NrdR (157 aa).

Residues 3 to 34 fold into a zinc finger; the sequence is CPFCRHPDSRVIDSRTSDDGLSIRRRRQCPEC. One can recognise an ATP-cone domain in the interval 46–136; the sequence is LSVIKRSGVV…VYQAFDSLED (91 aa).

This sequence belongs to the NrdR family. The cofactor is Zn(2+).

Its function is as follows. Negatively regulates transcription of bacterial ribonucleotide reductase nrd genes and operons by binding to NrdR-boxes. This chain is Transcriptional repressor NrdR, found in Leifsonia xyli subsp. xyli (strain CTCB07).